The sequence spans 359 residues: Chorismate synthase (359 aa).

R47 is a binding site for NADP(+). Residues 123-125 (RSS), G283, 298-302 (KPTSS), and R326 contribute to the FMN site.

Belongs to the chorismate synthase family. Homotetramer. Requires FMNH2 as cofactor.

The enzyme catalyses 5-O-(1-carboxyvinyl)-3-phosphoshikimate = chorismate + phosphate. It participates in metabolic intermediate biosynthesis; chorismate biosynthesis; chorismate from D-erythrose 4-phosphate and phosphoenolpyruvate: step 7/7. Catalyzes the anti-1,4-elimination of the C-3 phosphate and the C-6 proR hydrogen from 5-enolpyruvylshikimate-3-phosphate (EPSP) to yield chorismate, which is the branch point compound that serves as the starting substrate for the three terminal pathways of aromatic amino acid biosynthesis. This reaction introduces a second double bond into the aromatic ring system. This is Chorismate synthase from Chlamydia abortus (strain DSM 27085 / S26/3) (Chlamydophila abortus).